The following is a 425-amino-acid chain: Serine--tRNA ligase (425 aa).

L-serine is bound at residue 232-234 (TAE). Residues 263–265 (RRE) and valine 279 each bind ATP. Residue glutamate 286 coordinates L-serine. 350–353 (EVVS) contributes to the ATP binding site. Residue threonine 387 participates in L-serine binding.

Belongs to the class-II aminoacyl-tRNA synthetase family. Type-1 seryl-tRNA synthetase subfamily. Homodimer. The tRNA molecule binds across the dimer.

Its subcellular location is the cytoplasm. It catalyses the reaction tRNA(Ser) + L-serine + ATP = L-seryl-tRNA(Ser) + AMP + diphosphate + H(+). The catalysed reaction is tRNA(Sec) + L-serine + ATP = L-seryl-tRNA(Sec) + AMP + diphosphate + H(+). The protein operates within aminoacyl-tRNA biosynthesis; selenocysteinyl-tRNA(Sec) biosynthesis; L-seryl-tRNA(Sec) from L-serine and tRNA(Sec): step 1/1. In terms of biological role, catalyzes the attachment of serine to tRNA(Ser). Is also able to aminoacylate tRNA(Sec) with serine, to form the misacylated tRNA L-seryl-tRNA(Sec), which will be further converted into selenocysteinyl-tRNA(Sec). This chain is Serine--tRNA ligase, found in Methanocorpusculum labreanum (strain ATCC 43576 / DSM 4855 / Z).